Consider the following 35-residue polypeptide: 30 kDa neutral phosphatase (35 aa).

A compositionally biased stretch (polar residues) spans 1-28 (KSSAEVQQTQQASIPASQKANLGNQNNI). A disordered region spans residues 1 to 35 (KSSAEVQQTQQASIPASQKANLGNQNNIMXVAXYQ).

Functionally, highly cationic enzyme that can bind human or rat immunoglobulins as well as serum albumin, and could therefore be involved in post-infectious sequelae. This chain is 30 kDa neutral phosphatase, found in Staphylococcus aureus.